Here is a 434-residue protein sequence, read N- to C-terminus: uncharacterized protein (434 aa).

Helical transmembrane passes span 50–70, 72–92, 95–115, 135–155, 158–178, 179–199, 229–249, 288–308, 319–339, 376–396, and 412–432; these read GSIA…SFTL, TGLL…VLAI, LMAF…LLPV, SPVV…QFGW, SLIA…YFPH, LNPE…IAIT, LPYI…KIFA, GFVP…VAGF, PNPM…VLLL, IFAA…AIYF, and VVAV…GLFV.

The protein resides in the cell membrane. This is an uncharacterized protein from Escherichia coli (strain K12).